Consider the following 927-residue polypeptide: Solute carrier family 12 protein B0303.11 (927 aa).

At methionine 1–aspartate 23 the chain is on the cytoplasmic side. A helical membrane pass occupies residues valine 24 to isoleucine 44. Over valine 45–threonine 53 the chain is Extracellular. Residues isoleucine 54–valine 74 traverse the membrane as a helical segment. The Cytoplasmic segment spans residues valine 75–glutamate 95. A helical membrane pass occupies residues phenylalanine 96–leucine 116. At threonine 117–aspartate 141 the chain is on the extracellular side. Residues leucine 142–valine 159 traverse the membrane as a helical segment. The Cytoplasmic segment spans residues arginine 160–arginine 165. The helical transmembrane segment at phenylalanine 166–valine 186 threads the bilayer. At methionine 187–glutamate 212 the chain is on the extracellular side. The chain crosses the membrane as a helical span at residues isoleucine 213–isoleucine 233. Residues glycine 234–glycine 244 lie on the Cytoplasmic side of the membrane. A helical membrane pass occupies residues alanine 245–valine 265. Residues glutamate 266–glutamate 284 lie on the Extracellular side of the membrane. The N-linked (GlcNAc...) asparagine glycan is linked to asparagine 275. Residues phenylalanine 285–leucine 305 form a helical membrane-spanning segment. Residues serine 306 to arginine 345 lie on the Cytoplasmic side of the membrane. A helical transmembrane segment spans residues cysteine 346–leucine 366. Position 367 (cysteine 367) is a topological domain, extracellular. The chain crosses the membrane as a helical span at residues isoleucine 368–valine 388. Over lysine 389–glutamate 394 the chain is Cytoplasmic. Residues isoleucine 395–leucine 415 form a helical membrane-spanning segment. At tyrosine 416 to arginine 419 the chain is on the extracellular side. The helical transmembrane segment at histidine 420–isoleucine 440 threads the bilayer. Residues arginine 441 to proline 927 lie on the Cytoplasmic side of the membrane.

Belongs to the SLC12A transporter family.

It localises to the cell membrane. The polypeptide is Solute carrier family 12 protein B0303.11 (Caenorhabditis elegans).